The primary structure comprises 407 residues: Multifunctional CCA protein (407 aa).

ATP is bound by residues Gly8 and Arg11. CTP is bound by residues Gly8 and Arg11. Positions 21 and 23 each coordinate Mg(2+). Residues Arg91, Arg137, and Arg140 each contribute to the ATP site. Arg91, Arg137, and Arg140 together coordinate CTP. In terms of domain architecture, HD spans Thr226–Leu327.

This sequence belongs to the tRNA nucleotidyltransferase/poly(A) polymerase family. Bacterial CCA-adding enzyme type 1 subfamily. Monomer. Can also form homodimers and oligomers. The cofactor is Mg(2+). It depends on Ni(2+) as a cofactor.

The enzyme catalyses a tRNA precursor + 2 CTP + ATP = a tRNA with a 3' CCA end + 3 diphosphate. It carries out the reaction a tRNA with a 3' CCA end + 2 CTP + ATP = a tRNA with a 3' CCACCA end + 3 diphosphate. Its function is as follows. Catalyzes the addition and repair of the essential 3'-terminal CCA sequence in tRNAs without using a nucleic acid template. Adds these three nucleotides in the order of C, C, and A to the tRNA nucleotide-73, using CTP and ATP as substrates and producing inorganic pyrophosphate. tRNA 3'-terminal CCA addition is required both for tRNA processing and repair. Also involved in tRNA surveillance by mediating tandem CCA addition to generate a CCACCA at the 3' terminus of unstable tRNAs. While stable tRNAs receive only 3'-terminal CCA, unstable tRNAs are marked with CCACCA and rapidly degraded. The sequence is that of Multifunctional CCA protein from Aromatoleum aromaticum (strain DSM 19018 / LMG 30748 / EbN1) (Azoarcus sp. (strain EbN1)).